Consider the following 265-residue polypeptide: MIYKKVHDEQKSLFFHKFKCQWVPRLGSFLPKRVRTLKIANGATAASVFHQKVKGQWVPRLGSFLPKRVRTLKIANGATAVSVFPHKVKGQWVPRLGSFLPKRVRTLKIANWATAVSVSLHTVKGQWVPRLGSFLLKWVRTLKFANGATAVSVFSDKAKDQWVPRLKFFLPIRMRTLKAVNKATAFPVFPHKLKGQWELRLKSFLIMRMRTLKSANKATTVPVFLHKVKDQWVPRLKYFLPIRMRTLKDANKATAVPVFPHKLKG.

The chain is Protein B8 (B8) from Homo sapiens (Human).